The sequence spans 160 residues: Nucleotide-binding protein VS_1405 (160 aa).

This sequence belongs to the YajQ family.

Functionally, nucleotide-binding protein. This is Nucleotide-binding protein VS_1405 from Vibrio atlanticus (strain LGP32) (Vibrio splendidus (strain Mel32)).